Here is a 117-residue protein sequence, read N- to C-terminus: MVTETPLEKPLDIGEIPLPAMEKRATEVAILLKTLAHPARLMLACTLAQGEFSVGELEAKLDIRQPTLSQQLGVLREAGIVDTRREAKQIFYRLAEDKAARLIEALYAIFCAPEENL.

The HTH arsR-type domain occupies 20–114 (AMEKRATEVA…ALYAIFCAPE (95 aa)). Positions 54-77 (VGELEAKLDIRQPTLSQQLGVLRE) form a DNA-binding region, H-T-H motif.

In terms of biological role, represses an operon that comprises at least itself and blh. Binds to a palindromic AT-rich sequence spanning the -10 region of the blh promoter and blocks transcription of the operon. This chain is Biofilm growth-associated repressor (bigR), found in Agrobacterium fabrum (strain C58 / ATCC 33970) (Agrobacterium tumefaciens (strain C58)).